We begin with the raw amino-acid sequence, 122 residues long: Small ribosomal subunit protein uS13 (122 aa).

The interval 93–122 (RRGLPVRGQRTKTNARTRKGPKKTVAGKKK) is disordered.

It belongs to the universal ribosomal protein uS13 family. In terms of assembly, part of the 30S ribosomal subunit. Forms a loose heterodimer with protein S19. Forms two bridges to the 50S subunit in the 70S ribosome.

In terms of biological role, located at the top of the head of the 30S subunit, it contacts several helices of the 16S rRNA. In the 70S ribosome it contacts the 23S rRNA (bridge B1a) and protein L5 of the 50S subunit (bridge B1b), connecting the 2 subunits; these bridges are implicated in subunit movement. Contacts the tRNAs in the A and P-sites. This is Small ribosomal subunit protein uS13 from Micrococcus luteus (strain ATCC 4698 / DSM 20030 / JCM 1464 / CCM 169 / CCUG 5858 / IAM 1056 / NBRC 3333 / NCIMB 9278 / NCTC 2665 / VKM Ac-2230) (Micrococcus lysodeikticus).